Consider the following 288-residue polypeptide: 33 kDa chaperonin (288 aa).

Disulfide bonds link Cys236–Cys238 and Cys269–Cys272.

It belongs to the HSP33 family. In terms of processing, under oxidizing conditions two disulfide bonds are formed involving the reactive cysteines. Under reducing conditions zinc is bound to the reactive cysteines and the protein is inactive.

It localises to the cytoplasm. Redox regulated molecular chaperone. Protects both thermally unfolding and oxidatively damaged proteins from irreversible aggregation. Plays an important role in the bacterial defense system toward oxidative stress. The sequence is that of 33 kDa chaperonin from Lactococcus lactis subsp. lactis (strain IL1403) (Streptococcus lactis).